The chain runs to 183 residues: Der GTPase-activating protein YihI (183 aa).

A disordered region spans residues 1 to 101 (MSRSKKTRKG…KLTDEQKLLK (101 aa)). 2 stretches are compositionally biased toward basic and acidic residues: residues 22-46 (KKQD…RHNE) and 92-101 (KLTDEQKLLK).

This sequence belongs to the YihI family. Interacts with Der.

Functionally, a GTPase-activating protein (GAP) that modifies Der/EngA GTPase function. May play a role in ribosome biogenesis. This Shewanella oneidensis (strain ATCC 700550 / JCM 31522 / CIP 106686 / LMG 19005 / NCIMB 14063 / MR-1) protein is Der GTPase-activating protein YihI.